Here is a 259-residue protein sequence, read N- to C-terminus: Ribosomal RNA small subunit methyltransferase A (259 aa).

The S-adenosyl-L-methionine site is built by N15, L17, G41, E62, D86, and N105.

It belongs to the class I-like SAM-binding methyltransferase superfamily. rRNA adenine N(6)-methyltransferase family. RsmA subfamily.

It is found in the cytoplasm. The catalysed reaction is adenosine(1518)/adenosine(1519) in 16S rRNA + 4 S-adenosyl-L-methionine = N(6)-dimethyladenosine(1518)/N(6)-dimethyladenosine(1519) in 16S rRNA + 4 S-adenosyl-L-homocysteine + 4 H(+). In terms of biological role, specifically dimethylates two adjacent adenosines (A1518 and A1519) in the loop of a conserved hairpin near the 3'-end of 16S rRNA in the 30S particle. May play a critical role in biogenesis of 30S subunits. The chain is Ribosomal RNA small subunit methyltransferase A from Mycoplasmopsis synoviae (strain 53) (Mycoplasma synoviae).